Consider the following 615-residue polypeptide: Peptidoglycan-binding protein YepA (615 aa).

The first 26 residues, 1 to 26 (MRNLAALLPALFLLGSSLLPAGTALA), serve as a signal peptide directing secretion.

The protein belongs to the bacterial solute-binding protein 5 family. As to quaternary structure, the complex is composed of one ATP-binding protein (YejF), two transmembrane proteins (YejB and YejE) and a solute-binding protein (YepA).

Its subcellular location is the periplasm. Part of the ABC transporter complex YejBEF-YepA involved in the uptake of muropeptides, the breakdown products of cell wall peptidoglycan. The import of muropeptides into the cell enables peptidoglycan recycling, which is vital for cell wall integrity in this bacterium. Probably binds muropeptides. This is Peptidoglycan-binding protein YepA from Agrobacterium fabrum (strain C58 / ATCC 33970) (Agrobacterium tumefaciens (strain C58)).